Here is a 266-residue protein sequence, read N- to C-terminus: MPISIPKGEKLMDLLSMKGKVTIVTGASGPRGMGIEAARGIAEMGGNVALTYAGRKEGGEKNAAALEKEYGIKAKAYKLDVANYESCCQLVKDVIADFGQIDAFVANAGKTADSGVLDGEISAFEEVIQTDLLGVAYCAKAVGHHFKERQTGSFVITASMSGHIANFPQEQTSYNVAKAGCIHMARSLANEWRDFARVNSISPGYIDTGLSDFVDKETQKLWHSMIPMGRDGDAKELKAAYVYFCSDASTYTTGSDLVIDGGYCAR.

Residues Asn107 and Lys140 each coordinate NADP(+). Ser159 (proton donor) is an active-site residue. NADP(+)-binding residues include Tyr174, Lys178, Ile206, and Thr208. Tyr174 functions as the Proton acceptor in the catalytic mechanism. The active-site Lowers pKa of active site Tyr is Lys178.

It belongs to the short-chain dehydrogenases/reductases (SDR) family. In terms of assembly, homotetramer.

The catalysed reaction is D-mannitol + NADP(+) = D-fructose + NADPH + H(+). In terms of biological role, catalyzes the interconversion between D-mannitol and D-fructose. Plays a key role in liamocins biosynthesis by providing the mannitol moity that is linked to 3,5-dihydroxydecanoic acid (provided by the HR-PKS PKS1) via ester bond formation catalyzed by the esterase EST1. This Aureobasidium melanogenum (Aureobasidium pullulans var. melanogenum) protein is NADP-dependent mannitol dehydrogenase.